Consider the following 293-residue polypeptide: Acidic endochitinase (293 aa).

A signal peptide spans M1 to N22. In terms of domain architecture, GH18 spans A24 to V293. 2 cysteine pairs are disulfide-bonded: C43–C90 and C73–C80. E150 serves as the catalytic Proton donor. A disulfide bridge links C179 with C208.

It belongs to the glycosyl hydrolase 18 family. Chitinase class II subfamily.

It is found in the secreted. It localises to the extracellular space. The enzyme catalyses Random endo-hydrolysis of N-acetyl-beta-D-glucosaminide (1-&gt;4)-beta-linkages in chitin and chitodextrins.. This protein functions as a defense against chitin containing fungal pathogens. This is Acidic endochitinase from Cicer arietinum (Chickpea).